The sequence spans 901 residues: Protein translocase subunit SecA (901 aa).

ATP is bound by residues Gln-89, 107–111 (GEGKT), and Asp-502. The interval 838–883 (YQQQQAETEAQMHPEHEEAEGGEVSGRVAGFDETDPTTWGNPSRND) is disordered. The Zn(2+) site is built by Cys-885, Cys-887, Cys-896, and His-897.

It belongs to the SecA family. In terms of assembly, monomer and homodimer. Part of the essential Sec protein translocation apparatus which comprises SecA, SecYEG and auxiliary proteins SecDF-YajC and YidC. The cofactor is Zn(2+).

It localises to the cell inner membrane. It is found in the cytoplasm. It carries out the reaction ATP + H2O + cellular proteinSide 1 = ADP + phosphate + cellular proteinSide 2.. Its function is as follows. Part of the Sec protein translocase complex. Interacts with the SecYEG preprotein conducting channel. Has a central role in coupling the hydrolysis of ATP to the transfer of proteins into and across the cell membrane, serving both as a receptor for the preprotein-SecB complex and as an ATP-driven molecular motor driving the stepwise translocation of polypeptide chains across the membrane. This Paracoccus denitrificans (strain Pd 1222) protein is Protein translocase subunit SecA.